Reading from the N-terminus, the 519-residue chain is Maltose/maltodextrin transport system permease protein MalF (519 aa).

The Cytoplasmic portion of the chain corresponds to 1–18; the sequence is MRKNPMDVIKKKHWWQSD. A helical transmembrane segment spans residues 19-41; it reads ALKWSVLGLLGLLVGYLVVLMYA. Topologically, residues 42-44 are periplasmic; sequence QGE. Residues 45–62 traverse the membrane as a helical segment; that stretch reads YLFAITTLILSSAGLYIF. The Cytoplasmic portion of the chain corresponds to 63 to 74; it reads ANRKAYAWRYVY. The helical transmembrane segment at 75–97 threads the bilayer; sequence PGMAGMGLFVLFPLVCTIAIAFT. The Periplasmic segment spans residues 98 to 288; it reads NYSSTNQLTF…QKPFLAIFVW (191 aa). The ABC transmembrane type-1 domain occupies 286–510; that stretch reads FVWTVVFSLI…LLVGALAIVN (225 aa). Residues 289–311 form a helical membrane-spanning segment; sequence TVVFSLITVFLTVAVGMVLACLV. The Cytoplasmic portion of the chain corresponds to 312–323; it reads QWEALRGKAVYR. A helical membrane pass occupies residues 324–346; that stretch reads VLLILPYAVPSFISILIFKGLFN. Residues 347–374 lie on the Periplasmic side of the membrane; that stretch reads QSFGEINMMLSALFGVKPAWFSDPTTAR. The helical transmembrane segment at 375–397 threads the bilayer; it reads TMLIIVNTWLGYPYMMILCMGLL. Residues 398–417 are Cytoplasmic-facing; the sequence is KAIPDDLYEASAMDGAGPFQ. Residues 418-440 traverse the membrane as a helical segment; the sequence is NFFKITLPLLIKPLTPLMIASFA. Topologically, residues 441 to 488 are periplasmic; it reads FNFNNFVLIQLLTNGGPDRLGTTTPAGYTDLLVNYTYRIAFEGGGGQD. The chain crosses the membrane as a helical span at residues 489–511; the sequence is FGLAAAIATLIFLLVGALAIVNL. The Cytoplasmic segment spans residues 512–519; the sequence is KATRMKFD.

It belongs to the binding-protein-dependent transport system permease family. MalFG subfamily. The complex is composed of two ATP-binding proteins (MalK), two transmembrane proteins (MalG and MalF) and a solute-binding protein (MalE).

It localises to the cell inner membrane. Its function is as follows. Part of the ABC transporter complex MalEFGK involved in maltose/maltodextrin import. Probably responsible for the translocation of the substrate across the membrane. The polypeptide is Maltose/maltodextrin transport system permease protein MalF (malF) (Escherichia coli O6:H1 (strain CFT073 / ATCC 700928 / UPEC)).